Reading from the N-terminus, the 460-residue chain is UDP-N-acetylmuramoylalanine--D-glutamate ligase (460 aa).

Position 117–123 (117–123 (GTNGKTT)) interacts with ATP.

It belongs to the MurCDEF family.

Its subcellular location is the cytoplasm. It carries out the reaction UDP-N-acetyl-alpha-D-muramoyl-L-alanine + D-glutamate + ATP = UDP-N-acetyl-alpha-D-muramoyl-L-alanyl-D-glutamate + ADP + phosphate + H(+). Its pathway is cell wall biogenesis; peptidoglycan biosynthesis. Cell wall formation. Catalyzes the addition of glutamate to the nucleotide precursor UDP-N-acetylmuramoyl-L-alanine (UMA). This Prochlorococcus marinus (strain MIT 9313) protein is UDP-N-acetylmuramoylalanine--D-glutamate ligase.